Reading from the N-terminus, the 96-residue chain is MNLRPLHDRVIVKRLENETKTASGIVIPENAAEKPDQGEVLAVGPGKKNDKGEVIALNVKVGDRVLFGKYSGQTVKVHGDELLVMKEDDLFAVVEK.

It belongs to the GroES chaperonin family. Heptamer of 7 subunits arranged in a ring. Interacts with the chaperonin GroEL.

The protein resides in the cytoplasm. Functionally, together with the chaperonin GroEL, plays an essential role in assisting protein folding. The GroEL-GroES system forms a nano-cage that allows encapsulation of the non-native substrate proteins and provides a physical environment optimized to promote and accelerate protein folding. GroES binds to the apical surface of the GroEL ring, thereby capping the opening of the GroEL channel. This chain is Co-chaperonin GroES, found in Delftia acidovorans (strain DSM 14801 / SPH-1).